A 220-amino-acid chain; its full sequence is GTP cyclohydrolase 1 (220 aa).

Zn(2+) is bound by residues C113, H116, and C184.

It belongs to the GTP cyclohydrolase I family. As to quaternary structure, homomer.

It carries out the reaction GTP + H2O = 7,8-dihydroneopterin 3'-triphosphate + formate + H(+). Its pathway is cofactor biosynthesis; 7,8-dihydroneopterin triphosphate biosynthesis; 7,8-dihydroneopterin triphosphate from GTP: step 1/1. The protein is GTP cyclohydrolase 1 of Hamiltonella defensa subsp. Acyrthosiphon pisum (strain 5AT).